Here is a 374-residue protein sequence, read N- to C-terminus: Anhydro-N-acetylmuramic acid kinase (374 aa).

ATP is bound at residue 12 to 19 (GTSLDGVD).

It belongs to the anhydro-N-acetylmuramic acid kinase family.

The catalysed reaction is 1,6-anhydro-N-acetyl-beta-muramate + ATP + H2O = N-acetyl-D-muramate 6-phosphate + ADP + H(+). It participates in amino-sugar metabolism; 1,6-anhydro-N-acetylmuramate degradation. The protein operates within cell wall biogenesis; peptidoglycan recycling. In terms of biological role, catalyzes the specific phosphorylation of 1,6-anhydro-N-acetylmuramic acid (anhMurNAc) with the simultaneous cleavage of the 1,6-anhydro ring, generating MurNAc-6-P. Is required for the utilization of anhMurNAc either imported from the medium or derived from its own cell wall murein, and thus plays a role in cell wall recycling. This Enterobacter sp. (strain 638) protein is Anhydro-N-acetylmuramic acid kinase.